Consider the following 370-residue polypeptide: ABSCISIC ACID-INSENSITIVE 5-like protein 8 (370 aa).

Phosphoserine occurs at positions 25, 44, and 69. Positions 56 to 77 are disordered; the sequence is SAEETQEGSQRQGSTTLPPTLS. Over residues 62 to 77 the composition is skewed to polar residues; sequence EGSQRQGSTTLPPTLS. T111 carries the phosphothreonine modification. Residues 260–278 are compositionally biased toward polar residues; sequence ESSLLSPSPYISNGSTSTR. Residues 260–281 are disordered; the sequence is ESSLLSPSPYISNGSTSTRGGK. One can recognise a bZIP domain in the interval 293–356; it reads VDKKLRRKIK…MEPGMISLHE (64 aa). The interval 295-314 is basic motif; the sequence is KKLRRKIKNRESAARSRARK. Residues 328 to 342 form a leucine-zipper region; that stretch reads LKKDYEELLKQHVEL. Residues 349–370 are disordered; sequence PGMISLHERPERKLRRTKSDIK. A compositionally biased stretch (basic and acidic residues) spans 354–370; the sequence is LHERPERKLRRTKSDIK.

It belongs to the bZIP family. ABI5 subfamily. DNA-binding heterodimer.

The protein resides in the nucleus. Functionally, could participate in abscisic acid-regulated gene expression. This is ABSCISIC ACID-INSENSITIVE 5-like protein 8 (BZIP15) from Arabidopsis thaliana (Mouse-ear cress).